We begin with the raw amino-acid sequence, 380 residues long: MTDYPIKYRLIKTEKHTGARLGEIITPHGTFPTPMFMPVGTQATVKTQSPEELKAIGSGIILSNTYHLWLRPGDELIARSGGLHKFMNWDQPILTDSGGFQVYSLADSRNITEEGVTFKNHLNGSKMFLSPEKAISIQNNLGSDIMMSFDECPQFYQPYDYVKKSIERTSRWAERGLKAHRRPHDQGLFGIVQGAGFEDLRRQSAADLVAMDFPGYSIGGLAVGESHEEMNAVLDFTTPLLPENKPRYLMGVGAPDSLIDGVIRGVDMFDCVLPTRIARNGTCMTSEGRLVVKNAKFAEDFTPLDHDCDCYTCQNYSRAYIRHLLKADETFGIRLTSYHNLYFLVNLMKKVRQAIMDDNLLEFRQDFLERYGYNKSNRNF.

The active-site Proton acceptor is the Asp-96. Substrate-binding positions include 96–100 (DSGGF), Asp-150, Gln-193, and Gly-220. The RNA binding stretch occupies residues 251 to 257 (GVGAPDS). The Nucleophile role is filled by Asp-270. The tract at residues 275 to 279 (TRIAR) is RNA binding; important for wobble base 34 recognition. Zn(2+) is bound by residues Cys-308, Cys-310, Cys-313, and His-339.

The protein belongs to the queuine tRNA-ribosyltransferase family. As to quaternary structure, homodimer. Within each dimer, one monomer is responsible for RNA recognition and catalysis, while the other monomer binds to the replacement base PreQ1. Zn(2+) is required as a cofactor.

The enzyme catalyses 7-aminomethyl-7-carbaguanine + guanosine(34) in tRNA = 7-aminomethyl-7-carbaguanosine(34) in tRNA + guanine. It functions in the pathway tRNA modification; tRNA-queuosine biosynthesis. Functionally, catalyzes the base-exchange of a guanine (G) residue with the queuine precursor 7-aminomethyl-7-deazaguanine (PreQ1) at position 34 (anticodon wobble position) in tRNAs with GU(N) anticodons (tRNA-Asp, -Asn, -His and -Tyr). Catalysis occurs through a double-displacement mechanism. The nucleophile active site attacks the C1' of nucleotide 34 to detach the guanine base from the RNA, forming a covalent enzyme-RNA intermediate. The proton acceptor active site deprotonates the incoming PreQ1, allowing a nucleophilic attack on the C1' of the ribose to form the product. After dissociation, two additional enzymatic reactions on the tRNA convert PreQ1 to queuine (Q), resulting in the hypermodified nucleoside queuosine (7-(((4,5-cis-dihydroxy-2-cyclopenten-1-yl)amino)methyl)-7-deazaguanosine). The protein is Queuine tRNA-ribosyltransferase of Streptococcus pyogenes serotype M49 (strain NZ131).